A 716-amino-acid polypeptide reads, in one-letter code: Polyribonucleotide nucleotidyltransferase (716 aa).

Positions 495 and 501 each coordinate Mg(2+). The 60-residue stretch at 562-621 folds into the KH domain; the sequence is PRLFRIQINPEQIGLVIGPGGKTIRSITEQTGAKIDIEDTGAVTISAVDADSALRAKSII. In terms of domain architecture, S1 motif spans 631-699; the sequence is GDVYIGKVTR…QKGRVNLTRK (69 aa).

It belongs to the polyribonucleotide nucleotidyltransferase family. Requires Mg(2+) as cofactor.

It is found in the cytoplasm. The catalysed reaction is RNA(n+1) + phosphate = RNA(n) + a ribonucleoside 5'-diphosphate. Involved in mRNA degradation. Catalyzes the phosphorolysis of single-stranded polyribonucleotides processively in the 3'- to 5'-direction. This chain is Polyribonucleotide nucleotidyltransferase, found in Synechococcus elongatus (strain ATCC 33912 / PCC 7942 / FACHB-805) (Anacystis nidulans R2).